We begin with the raw amino-acid sequence, 510 residues long: Maturase K (510 aa).

Belongs to the intron maturase 2 family. MatK subfamily.

The protein localises to the plastid. Its subcellular location is the chloroplast. In terms of biological role, usually encoded in the trnK tRNA gene intron. Probably assists in splicing its own and other chloroplast group II introns. The protein is Maturase K of Populus alba (White poplar).